A 38-amino-acid chain; its full sequence is Photosystem II reaction center protein L (38 aa).

Residues 17-37 form a helical membrane-spanning segment; sequence SLYWGLLLIFVLAVLFSNYFF.

The protein belongs to the PsbL family. PSII is composed of 1 copy each of membrane proteins PsbA, PsbB, PsbC, PsbD, PsbE, PsbF, PsbH, PsbI, PsbJ, PsbK, PsbL, PsbM, PsbT, PsbX, PsbY, PsbZ, Psb30/Ycf12, at least 3 peripheral proteins of the oxygen-evolving complex and a large number of cofactors. It forms dimeric complexes.

It localises to the plastid. The protein localises to the chloroplast thylakoid membrane. One of the components of the core complex of photosystem II (PSII). PSII is a light-driven water:plastoquinone oxidoreductase that uses light energy to abstract electrons from H(2)O, generating O(2) and a proton gradient subsequently used for ATP formation. It consists of a core antenna complex that captures photons, and an electron transfer chain that converts photonic excitation into a charge separation. This subunit is found at the monomer-monomer interface and is required for correct PSII assembly and/or dimerization. This is Photosystem II reaction center protein L from Huperzia lucidula (Shining clubmoss).